Consider the following 298-residue polypeptide: tRNA pseudouridine synthase B (298 aa).

The Nucleophile role is filled by Asp39.

It belongs to the pseudouridine synthase TruB family. Type 1 subfamily.

It carries out the reaction uridine(55) in tRNA = pseudouridine(55) in tRNA. Its function is as follows. Responsible for synthesis of pseudouridine from uracil-55 in the psi GC loop of transfer RNAs. In Oenococcus oeni (strain ATCC BAA-331 / PSU-1), this protein is tRNA pseudouridine synthase B.